Reading from the N-terminus, the 151-residue chain is SsrA-binding protein (151 aa).

The interval 121 to 151 (GKKLHDKRDTEKDREWQREKQRVMKNQRGAA) is disordered. Positions 126–142 (DKRDTEKDREWQREKQR) are enriched in basic and acidic residues.

This sequence belongs to the SmpB family.

The protein localises to the cytoplasm. Required for rescue of stalled ribosomes mediated by trans-translation. Binds to transfer-messenger RNA (tmRNA), required for stable association of tmRNA with ribosomes. tmRNA and SmpB together mimic tRNA shape, replacing the anticodon stem-loop with SmpB. tmRNA is encoded by the ssrA gene; the 2 termini fold to resemble tRNA(Ala) and it encodes a 'tag peptide', a short internal open reading frame. During trans-translation Ala-aminoacylated tmRNA acts like a tRNA, entering the A-site of stalled ribosomes, displacing the stalled mRNA. The ribosome then switches to translate the ORF on the tmRNA; the nascent peptide is terminated with the 'tag peptide' encoded by the tmRNA and targeted for degradation. The ribosome is freed to recommence translation, which seems to be the essential function of trans-translation. The sequence is that of SsrA-binding protein from Chromobacterium violaceum (strain ATCC 12472 / DSM 30191 / JCM 1249 / CCUG 213 / NBRC 12614 / NCIMB 9131 / NCTC 9757 / MK).